The chain runs to 457 residues: DDB1- and CUL4-associated factor 10 (457 aa).

WD repeat units follow at residues 65-104 (RTHG…HIKT), 108-146 (AHED…SKVC), 150-189 (GHTS…EDGC), and 195-234 (FHTR…KSLE). Low complexity predominate over residues 246–265 (TASTSDMTSTSSDTRPSSSP). The segment at 246–304 (TASTSDMTSTSSDTRPSSSPCHNSDLGPLFEKHMSRSSQREGASPRNSLEVLTPEVPGE) is disordered. Positions 281 to 292 (RSSQREGASPRN) are enriched in polar residues. WD repeat units follow at residues 306–346 (DRGN…QEGA), 368–406 (VGRG…KELV), and 424–457 (SHKD…QPKF).

It belongs to the WD repeat DCAF10 family.

It functions in the pathway protein modification; protein ubiquitination. Its function is as follows. May function as a substrate receptor for CUL4-DDB1 E3 ubiquitin-protein ligase complex. This is DDB1- and CUL4-associated factor 10 (dcaf10) from Xenopus tropicalis (Western clawed frog).